Consider the following 1030-residue polypeptide: ATPase MORC2A (1030 aa).

Ala2 carries the post-translational modification N-acetylalanine. Residues Asn39, 87-89, and 99-105 each bind ATP; these read SAK and QYGNGLK. Asn39 contributes to the Mg(2+) binding site. Residues 285 to 362 adopt a coiled-coil conformation; it reads KTRAEQEVKK…KDAKQRALKE (78 aa). ATP is bound at residue Lys427. The CW-type zinc finger occupies 490-544; it reads AMEIPTTIQCDLCLKWRTLPFQLSSVETDYPDTWVCSMNPDPEQDRCEASEQKQK. Positions 499, 502, 525, and 536 each coordinate Zn(2+). The segment at 530-791 is disordered; the sequence is DPEQDRCEAS…HPAELRKAQK (262 aa). 2 stretches are compositionally biased toward basic and acidic residues: residues 532–543 and 550–577; these read EQDRCEASEQKQ and LKKD…KLEA. Residues 555-583 adopt a coiled-coil conformation; the sequence is KTQEEKQKQLTEKIRQQQEKLEALQKTTP. At Thr582 the chain carries Phosphothreonine. Ser614 is subject to Phosphoserine. Over residues 629–646 the composition is skewed to polar residues; the sequence is PSIQTPRPSTQLRKTSVI. Glycyl lysine isopeptide (Lys-Gly) (interchain with G-Cter in SUMO2) cross-links involve residues Lys650 and Lys702. Residues 693–702 are compositionally biased toward low complexity; that stretch reads PPLSLIPSSK. The residue at position 703 (Ser703) is a Phosphoserine. Residue Lys714 forms a Glycyl lysine isopeptide (Lys-Gly) (interchain with G-Cter in SUMO2) linkage. Ser728 carries the post-translational modification Phosphoserine. Thr731 is modified (phosphothreonine). Ser737 and Ser741 each carry phosphoserine. The stretch at 738 to 775 forms a coiled coil; it reads LAVSDEEEAEEEAEKRRERCKRGKLAVKEEKKEANELS. The segment covering 763–772 has biased composition (basic and acidic residues); that stretch reads AVKEEKKEAN. Residue Lys765 forms a Glycyl lysine isopeptide (Lys-Gly) (interchain with G-Cter in SUMO2) linkage. Phosphoserine is present on residues Ser775 and Ser777. Positions 779 to 791 are enriched in basic and acidic residues; it reads GEDHPAELRKAQK. Lys817 is covalently cross-linked (Glycyl lysine isopeptide (Lys-Gly) (interchain with G-Cter in SUMO2)). Thr834 is modified (phosphothreonine). The segment covering 837 to 849 has biased composition (basic and acidic residues); the sequence is DRWVEKGSEDVRL. Disordered regions lie at residues 837–874 and 882–901; these read DRWV…EAMV and PEPS…ATSP. Phosphoserine is present on residues Ser854 and Ser859. Residues 856 to 865 show a composition bias toward polar residues; sequence EHQSPDTQQE. Lys930 participates in a covalent cross-link: Glycyl lysine isopeptide (Lys-Gly) (interchain with G-Cter in SUMO2). A coiled-coil region spans residues 966 to 1011; that stretch reads RADSRAKASEESLRTSEKKLRETEEKLQKLRTNIVALLQKVQEDID.

Homodimerizes upon ATP-binding and dissociate upon ATP hydrolysis; homodimerization is required for gene silencing. Binds histone H3 independently of the methylation status at 'Lys-9'. Interacts with HDAC4. Interacts with FAM208A/TASOR and MPHOSPH8; the interactions associate MORC2 with the HUSH complex which recruits MORC2 to heterochromatic loci. Interacts with Morc2b. In terms of processing, phosphorylated by PAK1 at Ser-737 upon DNA damage. Phosphorylation is required for ATPase activity and recruitment to damaged chromatin. As to expression, expressed in the axons and Schwann cells of peripheral nerves. Expressed in testes.

The protein resides in the nucleus. The protein localises to the cytoplasm. Its subcellular location is the cytosol. It localises to the chromosome. It is found in the nucleus matrix. The catalysed reaction is ATP + H2O = ADP + phosphate + H(+). ATPase activity is dependent of phosphorylation by PAK1 and presence of DNA. Functionally, essential for epigenetic silencing by the HUSH complex. Recruited by HUSH to target site in heterochromatin, the ATPase activity and homodimerization are critical for HUSH-mediated silencing. Represses germ cell-related genes and L1 retrotransposons in collaboration with SETDB1 and the HUSH complex, the silencing is dependent of repressive epigenetic modifications, such as H3K9me3 mark. Silencing events often occur within introns of transcriptionally active genes, and lead to the down-regulation of host gene expression. During DNA damage response, regulates chromatin remodeling through ATP hydrolysis. During DNA damage response, may regulate chromatin remodeling through ATP hydrolysis. The chain is ATPase MORC2A from Mus musculus (Mouse).